Consider the following 505-residue polypeptide: Lysine--tRNA ligase (505 aa).

Polar residues predominate over residues 1–11 (MSDQQLDQPSL). A disordered region spans residues 1 to 23 (MSDQQLDQPSLSHEERQHEENKL). The segment covering 12–23 (SHEERQHEENKL) has biased composition (basic and acidic residues). Glu415 and Glu422 together coordinate Mg(2+).

Belongs to the class-II aminoacyl-tRNA synthetase family. Homodimer. Requires Mg(2+) as cofactor.

It is found in the cytoplasm. The enzyme catalyses tRNA(Lys) + L-lysine + ATP = L-lysyl-tRNA(Lys) + AMP + diphosphate. In Ectopseudomonas mendocina (strain ymp) (Pseudomonas mendocina), this protein is Lysine--tRNA ligase.